Here is a 338-residue protein sequence, read N- to C-terminus: Glycerol-3-phosphate dehydrogenase [NAD(P)+] (338 aa).

Positions 13, 14, and 108 each coordinate NADPH. Residues lysine 108, glycine 139, and serine 141 each contribute to the sn-glycerol 3-phosphate site. Alanine 143 serves as a coordination point for NADPH. Residues lysine 194, aspartate 247, serine 257, arginine 258, and asparagine 259 each contribute to the sn-glycerol 3-phosphate site. Lysine 194 acts as the Proton acceptor in catalysis. An NADPH-binding site is contributed by arginine 258. NADPH contacts are provided by valine 282 and glutamate 284.

This sequence belongs to the NAD-dependent glycerol-3-phosphate dehydrogenase family.

Its subcellular location is the cytoplasm. It catalyses the reaction sn-glycerol 3-phosphate + NAD(+) = dihydroxyacetone phosphate + NADH + H(+). It carries out the reaction sn-glycerol 3-phosphate + NADP(+) = dihydroxyacetone phosphate + NADPH + H(+). Its pathway is membrane lipid metabolism; glycerophospholipid metabolism. In terms of biological role, catalyzes the reduction of the glycolytic intermediate dihydroxyacetone phosphate (DHAP) to sn-glycerol 3-phosphate (G3P), the key precursor for phospholipid synthesis. In Listeria monocytogenes serotype 4b (strain CLIP80459), this protein is Glycerol-3-phosphate dehydrogenase [NAD(P)+].